A 369-amino-acid polypeptide reads, in one-letter code: Endophilin-A (369 aa).

The region spanning 18 to 248 is the BAR domain; sequence TEKMGGAEGT…LQEKRAEAES (231 aa). The stretch at 227–249 forms a coiled coil; that stretch reads QCADVLRGLQETLQEKRAEAESR. The segment covering 275–294 has biased composition (low complexity); the sequence is GTPSHISSSASPLPSPMRSP. A disordered region spans residues 275–297; that stretch reads GTPSHISSSASPLPSPMRSPAKS. The 60-residue stretch at 305-364 folds into the SH3 domain; that stretch reads QQQPCCQALYDFDPENPGELGFKENDIITLLNRVDDNWYEGAVNGRTGYFPQSYVQVQVP.

The protein belongs to the endophilin family.

The protein resides in the cytoplasm. It localises to the membrane. In terms of biological role, required presynaptically at the neuromuscular junction. Implicated in synaptic vesicle endocytosis. This is Endophilin-A from Drosophila virilis (Fruit fly).